Consider the following 120-residue polypeptide: Large ribosomal subunit protein uL18 (120 aa).

Belongs to the universal ribosomal protein uL18 family. As to quaternary structure, part of the 50S ribosomal subunit; part of the 5S rRNA/L5/L18/L25 subcomplex. Contacts the 5S and 23S rRNAs.

In terms of biological role, this is one of the proteins that bind and probably mediate the attachment of the 5S RNA into the large ribosomal subunit, where it forms part of the central protuberance. This Brucella suis biovar 1 (strain 1330) protein is Large ribosomal subunit protein uL18.